Reading from the N-terminus, the 457-residue chain is Cysteine--tRNA ligase (457 aa).

Zn(2+) is bound at residue C31. Positions 33 to 43 (PTVYNYAHIGN) match the 'HIGH' region motif. Residues C211, H236, and E240 each coordinate Zn(2+). Positions 269-273 (KMSKS) match the 'KMSKS' region motif. K272 provides a ligand contact to ATP.

This sequence belongs to the class-I aminoacyl-tRNA synthetase family. Monomer. Requires Zn(2+) as cofactor.

It is found in the cytoplasm. It catalyses the reaction tRNA(Cys) + L-cysteine + ATP = L-cysteinyl-tRNA(Cys) + AMP + diphosphate. In Xanthomonas campestris pv. campestris (strain ATCC 33913 / DSM 3586 / NCPPB 528 / LMG 568 / P 25), this protein is Cysteine--tRNA ligase.